The following is a 367-amino-acid chain: B2 bradykinin receptor (367 aa).

At 1–36 (MLNITSQVLAPALNGSVSQSSGCPNTEWSGWLNVIQ) the chain is on the extracellular side. Residues asparagine 3 and asparagine 14 are each glycosylated (N-linked (GlcNAc...) asparagine). A helical membrane pass occupies residues 37-60 (APFLWVLFVLATLENLFVLSVFCL). The Cytoplasmic portion of the chain corresponds to 61–69 (HKSSCTVAE). Residues 70–94 (VYLGNLAAADLILACGLPFWAVTIA) form a helical membrane-spanning segment. At 95–107 (NHFDWLFGEALCR) the chain is on the extracellular side. The cysteines at positions 106 and 187 are disulfide-linked. The helical transmembrane segment at 108–129 (VVNTMIYMNLYSSICFLMLVSI) threads the bilayer. Residues 130 to 151 (DRYLALVKTMSIGRMRRVRWAK) are Cytoplasmic-facing. At tyrosine 132 the chain carries Phosphotyrosine. The helical transmembrane segment at 152-174 (LYSLVIWGCTLLLSSPMLVFRTM) threads the bilayer. Over 175 to 197 (KDYRDEGYNVTACIIDYPSRSWE) the chain is Extracellular. Asparagine 183 carries an N-linked (GlcNAc...) asparagine glycan. The helical transmembrane segment at 198–224 (VFTNVLLNLVGFLLPLSVITFCTVQIL) threads the bilayer. Over 225–243 (QVLRNNEMQKFKEIQTERR) the chain is Cytoplasmic. The chain crosses the membrane as a helical span at residues 244 to 268 (ATVLVLAVLLLFVVCWLPFQVSTFL). The Extracellular segment spans residues 269–287 (DTLLKLGVLSSCWDEHVID). Residues 288–311 (VITQVGSFMGYSNSCLNPLVYVIV) traverse the membrane as a helical segment. At 312 to 367 (GKRFRKKSREVYRAACPKAGCVLEPVQAESSMGTLRTSISVERQIHKLPEWTRSSQ) the chain is on the cytoplasmic side. Tyrosine 323 carries the post-translational modification Phosphotyrosine. The S-palmitoyl cysteine moiety is linked to residue cysteine 327. Serine 342 is modified (phosphoserine). Threonine 345 bears the Phosphothreonine mark. Phosphoserine; by GRK6 is present on residues serine 349 and serine 351.

It belongs to the G-protein coupled receptor 1 family. Bradykinin receptor subfamily. BDKRB2 sub-subfamily. As to quaternary structure, forms a complex with PECAM1 and GNAQ. Interacts with PECAM1.

Its subcellular location is the cell membrane. Receptor for bradykinin. It is associated with G proteins that activate a phosphatidylinositol-calcium second messenger system. In Oryctolagus cuniculus (Rabbit), this protein is B2 bradykinin receptor (BDKRB2).